The primary structure comprises 652 residues: Spermatogenesis-associated protein 13 (652 aa).

The disordered stretch occupies residues 1–24; sequence MTSASPEDQNAPVGCPKGARRRRP. Ser78 carries the post-translational modification Phosphoserine. Positions 81 to 108 are disordered; the sequence is IGLDRVGRRRQMRASNVSSDGGTEPSAL. The tract at residues 98–150 is ABR (APC-binding region) domain; that stretch reads SSDGGTEPSALVDDNGSEEDFSYEDLCQASPRYLQPGGEQLAINELISDGNVV. The residue at position 114 (Ser114) is a Phosphoserine. An SH3 domain is found at 147 to 206; it reads GNVVCAEALWDHVTMDDQELGFKAGDVIQVLEASNKDWWWGRSEDKEAWFPASFVRLRVN. The interval 209–235 is disordered; sequence ELSENSSSTPSEEQDEEASQSRHRHCE. Residues 240–424 enclose the DH domain; it reads MRTNVIREIM…KNVACLINER (185 aa). Residues 455 to 561 form the PH domain; sequence ELIHSGELTK…WLQACADERR (107 aa). The tract at residues 561–652 is C-terminal tail; it reads RRVQEDKEMG…TFNRLTPFRK (92 aa).

In terms of assembly, interacts (via ABR and SH3 domain) with APC. The binding of APC enhances its GEF activity by relieving it from an autoinhibitory conformation, in which the ABR and SH3 domains are associated with the C-terminal tail. Interacts (via C-terminal tail) with PPP1R9B (via C-terminus). Interacts with RAC1. In terms of tissue distribution, expressed at high levels in the placenta, spleen and kidney, at moderate levels in lung, small intestine, liver, brain and heart, and at low levels in skeletal muscle. Expression is aberrantly enhanced in most colorectal tumors.

The protein resides in the cytoplasm. It localises to the cell projection. The protein localises to the filopodium. It is found in the lamellipodium. Its subcellular location is the ruffle membrane. The protein resides in the podosome. Its activity is regulated as follows. Both the ABR and the SH3 domains contribute to maintaining the protein in an inhibited conformation by associating with the C-terminal tail. Binding of these domains to the C-terminal tail inhibits the activity of the protein by blocking a region that is required for its GEF activity. Functionally, acts as a guanine nucleotide exchange factor (GEF) for RHOA, RAC1 and CDC42 GTPases. Regulates cell migration and adhesion assembly and disassembly through a RAC1, PI3K, RHOA and AKT1-dependent mechanism. Increases both RAC1 and CDC42 activity, but decreases the amount of active RHOA. Required for MMP9 up-regulation via the JNK signaling pathway in colorectal tumor cells. Involved in tumor angiogenesis and may play a role in intestinal adenoma formation and tumor progression. This is Spermatogenesis-associated protein 13 from Homo sapiens (Human).